The following is an 864-amino-acid chain: MLGSIVKKVFGSKNDRYLKSLNHYLKEINALEENIATMPDEAISARMAELRAEVQQGTSLDSILPEVFAMVREAGKRVLGMRHYDVQMVGGIALHSGKIAEMRTGEGKTLVATLPAALNALTGKGVHLITVNDYLARRDAEWMGKIYNFLGLSVGVIVHGLNDEERRAAYASDITYGTNNEFGFDYLRDNMKFYKEQLVQRPHHFAIVDEVDSILIDEARTPLIISGPSDESTGLYRRVNDIIPRLKRDTHYTVDEKARAAALTDEGVQEAEKLLGLDNLYDPQNISFQHHILQALKAHSIFTRDVDYIVKDDQVVIVDEFTGRLMPGRRFSDGLHQALEAKEGVKVEAENQTLASITFQNYFRMYEKLSGMTGTADTEAVEFQQIYDLEVVNIPTNKPMIRKDQPDSIYRTRPEKFNAIVEEIARLHHKGQPVLVGTISIETSELIAGMLKKKGVPHNVLNAKQHEKEAEIVAEAGQAGKVTIATNMAGRGTDIVLGEGVPQLGGLYILGTERHESRRIDNQLRGRSGRQGDPGETRFFLSLEDDLLRLFGSDRIAGLMERLGMQEGEPIENKMVSRAIENAQKRVEGHNFEIRKTLLDYDNVMNQQREVIYSLRRDTMMEDDLEPSVHEFLDDIIEDIYAPLEQTKGKALDEETHAAIAARLEETFFLSRVYPEFALKGSEQQEKLPELPSAADVKKAVESMLEKLKRDAGPVYGDILRYFLLEELDRNWKEHLLNMDHLRDGIGLRGYGQRDPKQEYKREGFSLFQNMLWSIKESVFRALTRLRLQRVEEAADPAEQPEAAGLQEAKATELRHKEQPAELSYSGGDEDGAKTPSRRNAPKVGRNDPCPCGSGKKYKKCCGA.

Residues Gln87, Gly105–Thr109, and Asp494 contribute to the ATP site. A disordered region spans residues Ala809–Ala864. Residues Lys810–Pro820 are compositionally biased toward basic and acidic residues. Residues Cys850, Cys852, Cys861, and Cys862 each contribute to the Zn(2+) site.

It belongs to the SecA family. Monomer and homodimer. Part of the essential Sec protein translocation apparatus which comprises SecA, SecYEG and auxiliary proteins SecDF-YajC and YidC. Zn(2+) serves as cofactor.

The protein resides in the cell inner membrane. Its subcellular location is the cytoplasm. It carries out the reaction ATP + H2O + cellular proteinSide 1 = ADP + phosphate + cellular proteinSide 2.. Part of the Sec protein translocase complex. Interacts with the SecYEG preprotein conducting channel. Has a central role in coupling the hydrolysis of ATP to the transfer of proteins into and across the cell membrane, serving as an ATP-driven molecular motor driving the stepwise translocation of polypeptide chains across the membrane. This chain is Protein translocase subunit SecA, found in Oleidesulfovibrio alaskensis (strain ATCC BAA-1058 / DSM 17464 / G20) (Desulfovibrio alaskensis).